We begin with the raw amino-acid sequence, 206 residues long: 2-phospho-L-lactate guanylyltransferase (206 aa).

It belongs to the CofC family. In terms of assembly, homodimer.

The catalysed reaction is (2S)-2-phospholactate + GTP + H(+) = (2S)-lactyl-2-diphospho-5'-guanosine + diphosphate. It participates in cofactor biosynthesis; coenzyme F420 biosynthesis. In terms of biological role, guanylyltransferase that catalyzes the activation of (2S)-2-phospholactate (2-PL) as (2S)-lactyl-2-diphospho-5'-guanosine, via the condensation of 2-PL with GTP. It is involved in the biosynthesis of coenzyme F420, a hydride carrier cofactor. This Haloferax volcanii (strain ATCC 29605 / DSM 3757 / JCM 8879 / NBRC 14742 / NCIMB 2012 / VKM B-1768 / DS2) (Halobacterium volcanii) protein is 2-phospho-L-lactate guanylyltransferase.